A 530-amino-acid polypeptide reads, in one-letter code: Proline--tRNA ligase, cytoplasmic (530 aa).

Belongs to the class-II aminoacyl-tRNA synthetase family.

Its subcellular location is the cytoplasm. The protein resides in the cytosol. The enzyme catalyses tRNA(Pro) + L-proline + ATP = L-prolyl-tRNA(Pro) + AMP + diphosphate. In terms of biological role, catalyzes the attachment of proline to tRNA(Pro) in a two-step reaction: proline is first activated by ATP to form Pro-AMP and then transferred to the acceptor end of tRNA(Pro). The chain is Proline--tRNA ligase, cytoplasmic from Arabidopsis thaliana (Mouse-ear cress).